The sequence spans 1131 residues: Filamin A-interacting protein 1-like (1131 aa).

The disordered stretch occupies residues 1 to 62 (MRSRSSNAEG…KSHTGKGHHT (62 aa)). Residues 50 to 62 (VSEKSHTGKGHHT) show a composition bias toward basic and acidic residues. Coiled-coil stretches lie at residues 139–583 (NELD…LSKV) and 610–780 (SKST…KSLR). A Phosphoserine modification is found at Ser789. Phosphothreonine occurs at positions 984 and 992. Ser1050 bears the Phosphoserine mark.

The protein belongs to the FILIP1 family.

The protein localises to the cytoplasm. It localises to the membrane. Its subcellular location is the nucleus. Acts as a regulator of the antiangiogenic activity on endothelial cells. When overexpressed in endothelial cells, leads to inhibition of cell proliferation and migration and an increase in apoptosis. Inhibits melanoma growth When expressed in tumor-associated vasculature. This chain is Filamin A-interacting protein 1-like (Filip1l), found in Mus musculus (Mouse).